The chain runs to 441 residues: tRNA-2-methylthio-N(6)-dimethylallyladenosine synthase (441 aa).

The MTTase N-terminal domain maps to 3 to 119; it reads KKVSIRTFGC…LPGLIRNAFQ (117 aa). Residues Cys12, Cys48, Cys82, Cys155, Cys159, and Cys162 each coordinate [4Fe-4S] cluster. In terms of domain architecture, Radical SAM core spans 141–371; that stretch reads RSGSISAFIP…IDLQSGISGE (231 aa). One can recognise a TRAM domain in the interval 374 to 437; the sequence is GNDVGSVQEV…QATLIGRCQD (64 aa).

The protein belongs to the methylthiotransferase family. MiaB subfamily. Monomer. [4Fe-4S] cluster is required as a cofactor.

Its subcellular location is the cytoplasm. It catalyses the reaction N(6)-dimethylallyladenosine(37) in tRNA + (sulfur carrier)-SH + AH2 + 2 S-adenosyl-L-methionine = 2-methylsulfanyl-N(6)-dimethylallyladenosine(37) in tRNA + (sulfur carrier)-H + 5'-deoxyadenosine + L-methionine + A + S-adenosyl-L-homocysteine + 2 H(+). Catalyzes the methylthiolation of N6-(dimethylallyl)adenosine (i(6)A), leading to the formation of 2-methylthio-N6-(dimethylallyl)adenosine (ms(2)i(6)A) at position 37 in tRNAs that read codons beginning with uridine. The polypeptide is tRNA-2-methylthio-N(6)-dimethylallyladenosine synthase (Prosthecochloris aestuarii (strain DSM 271 / SK 413)).